A 136-amino-acid chain; its full sequence is Small ribosomal subunit protein uS9 (136 aa).

The disordered stretch occupies residues 97–136 (SPDNRKPLKTEGHLSRDPRAKERRKYGLKKARKAPQFSKR). The span at 98–116 (PDNRKPLKTEGHLSRDPRA) shows a compositional bias: basic and acidic residues. Over residues 117-136 (KERRKYGLKKARKAPQFSKR) the composition is skewed to basic residues.

Belongs to the universal ribosomal protein uS9 family.

This Prochlorococcus marinus (strain AS9601) protein is Small ribosomal subunit protein uS9.